The primary structure comprises 377 residues: RING finger protein 215 (377 aa).

Residues 1 to 22 (MGPAARPALRSPPPPPPPPPSP) are Cytoplasmic-facing. The disordered stretch occupies residues 1–22 (MGPAARPALRSPPPPPPPPPSP). Residues 10-22 (RSPPPPPPPPPSP) show a composition bias toward pro residues. The chain crosses the membrane as a helical span at residues 23–43 (LLLLLPLLPLWLGLAGPGAAA). Residues 44–250 (DGSEPAAGAG…GGSRAQEQKP (207 aa)) lie on the Extracellular side of the membrane. Asn-186 carries N-linked (GlcNAc...) asparagine glycosylation. The chain crosses the membrane as a helical span at residues 251 to 271 (LQQLWNAILLVAMLLCTGLVV). Residues 272 to 377 (QAQRQASRQS…NVLGNRYSDD (106 aa)) lie on the Cytoplasmic side of the membrane. The RING-type; atypical zinc finger occupies 325–366 (CAVCLDYFCNKQWLRVLPCKHEFHRDCVDPWLMLQQTCPLCK).

It is found in the membrane. The protein is RING finger protein 215 (RNF215) of Homo sapiens (Human).